A 157-amino-acid chain; its full sequence is MLRQLNLTREISRWIFMPWQRGAAGTASAEPPALPINDVIVDYDGPDLPLPEYPQRPNEPLEIRKQRLVYQSRKRGMLENDLLLSTFAAKYLKNFNEEQTAIYDQLINGVSNDWDIYYWATDVKTTPAEYNTEIMQLLKEHVKNTERVQRFRQPDLT.

It belongs to the SDHAF2 family. In terms of assembly, interacts with the flavoprotein subunit within the SDH catalytic dimer.

Its subcellular location is the mitochondrion matrix. Plays an essential role in the assembly of succinate dehydrogenase (SDH), an enzyme complex (also referred to as respiratory complex II) that is a component of both the tricarboxylic acid (TCA) cycle and the mitochondrial electron transport chain, and which couples the oxidation of succinate to fumarate with the reduction of ubiquinone (coenzyme Q) to ubiquinol. Required for flavinylation (covalent attachment of FAD) of the flavoprotein subunit of the SDH catalytic dimer. In Drosophila willistoni (Fruit fly), this protein is Succinate dehydrogenase assembly factor 2-A, mitochondrial.